The chain runs to 151 residues: UPF0098 protein MTH_273 (151 aa).

Belongs to the UPF0098 family.

This is UPF0098 protein MTH_273 from Methanothermobacter thermautotrophicus (strain ATCC 29096 / DSM 1053 / JCM 10044 / NBRC 100330 / Delta H) (Methanobacterium thermoautotrophicum).